The following is a 107-amino-acid chain: Ig kappa chain V-VI region SAPC 10 (107 aa).

Residues 1–23 (EIVLTQSPAITAASLGQKVTITC) are framework-1. An intrachain disulfide couples C23 to C87. Positions 24-33 (SASSSVSYMH) are complementarity-determining-1. The interval 34–48 (WYQQKSGTSPKPWIY) is framework-2. The tract at residues 49–55 (EISKLAS) is complementarity-determining-2. Positions 56 to 87 (GVPARFSGSGSGTSYSLTISSMEAEDAAIYYC) are framework-3. Residues 88-96 (QQWNYPLIT) form a complementarity-determining-3 region. The segment at 97-106 (FGGGTKLEIK) is framework-4.

The protein is Ig kappa chain V-VI region SAPC 10 of Mus musculus (Mouse).